The following is a 148-amino-acid chain: Large ribosomal subunit protein uL15 (148 aa).

The disordered stretch occupies residues 1–51 (MNLSNLKPAEGSTKTRKRIGRGPGSGLGGTSTRGHKGAKSRSGYSKKIGFE). Over residues 21-31 (RGPGSGLGGTS) the composition is skewed to gly residues.

Belongs to the universal ribosomal protein uL15 family. As to quaternary structure, part of the 50S ribosomal subunit.

In terms of biological role, binds to the 23S rRNA. The sequence is that of Large ribosomal subunit protein uL15 from Phocaeicola vulgatus (strain ATCC 8482 / DSM 1447 / JCM 5826 / CCUG 4940 / NBRC 14291 / NCTC 11154) (Bacteroides vulgatus).